The primary structure comprises 54 residues: NPRGLPAFKHGNXVLNESYAXMYLESQFGSXGXLIPDADVIYYNWKVPEGERHD.

It belongs to the GST superfamily. Theta family. Homodimer. The N-terminus is blocked.

Its subcellular location is the cytoplasm. It carries out the reaction RX + glutathione = an S-substituted glutathione + a halide anion + H(+). Its function is as follows. Conjugation of reduced glutathione to a wide number of exogenous and endogenous hydrophobic electrophiles. This is Glutathione S-transferase 6.7 from Dicentrarchus labrax (European seabass).